Consider the following 521-residue polypeptide: Glutamyl-tRNA(Gln) amidotransferase subunit B, mitochondrial (521 aa).

The transit peptide at 1–22 directs the protein to the mitochondrion; that stretch reads MIALLRWGIARPSAPLRWSRCF.

It belongs to the GatB/GatE family. GatB subfamily. In terms of assembly, subunit of the heterotrimeric GatCAB amidotransferase (AdT) complex, composed of A, B and C subunits.

Its subcellular location is the mitochondrion. It carries out the reaction L-glutamyl-tRNA(Gln) + L-glutamine + ATP + H2O = L-glutaminyl-tRNA(Gln) + L-glutamate + ADP + phosphate + H(+). Its function is as follows. Allows the formation of correctly charged Gln-tRNA(Gln) through the transamidation of misacylated Glu-tRNA(Gln) in the mitochondria. The reaction takes place in the presence of glutamine and ATP through an activated gamma-phospho-Glu-tRNA(Gln). The chain is Glutamyl-tRNA(Gln) amidotransferase subunit B, mitochondrial from Cryptococcus neoformans var. neoformans serotype D (strain JEC21 / ATCC MYA-565) (Filobasidiella neoformans).